Consider the following 110-residue polypeptide: Large ribosomal subunit protein eL30 (110 aa).

Belongs to the eukaryotic ribosomal protein eL30 family.

The polypeptide is Large ribosomal subunit protein eL30 (rpl30e) (Methanocaldococcus jannaschii (strain ATCC 43067 / DSM 2661 / JAL-1 / JCM 10045 / NBRC 100440) (Methanococcus jannaschii)).